Reading from the N-terminus, the 89-residue chain is Putative septation protein SpoVG (89 aa).

Belongs to the SpoVG family.

Its function is as follows. Could be involved in septation. This is Putative septation protein SpoVG from Heliobacterium modesticaldum (strain ATCC 51547 / Ice1).